Reading from the N-terminus, the 143-residue chain is Crossover junction endodeoxyribonuclease Hjc (143 aa).

Residue glutamate 12 participates in Mg(2+) binding. The active site involves serine 32. Aspartate 42 and glutamate 55 together coordinate Mg(2+).

It belongs to the Holliday junction resolvase Hjc family. As to quaternary structure, homodimer. Requires Mg(2+) as cofactor.

The enzyme catalyses Endonucleolytic cleavage at a junction such as a reciprocal single-stranded crossover between two homologous DNA duplexes (Holliday junction).. A structure-specific endonuclease that resolves Holliday junction (HJ) intermediates during genetic recombination. Cleaves 4-way DNA junctions introducing paired nicks in opposing strands, leaving a 5'-terminal phosphate and a 3'-terminal hydroxyl group that are subsequently ligated to produce recombinant products. Its function is as follows. Hjc, Hjm (Hel308) and PINA coordinate HJ migration and cleavage of replication forks in a coordinated way. The protein is Crossover junction endodeoxyribonuclease Hjc of Saccharolobus islandicus (strain REY15A) (Sulfolobus islandicus).